Consider the following 772-residue polypeptide: E3 ubiquitin-protein ligase UHRF1 (772 aa).

The region spanning 1-77 (MWIQVRTMDG…IVQLLVRQIP (77 aa)) is the Ubiquitin-like domain. Residues 90 to 111 (SDASAGCGSGQRDSDSGSGEGA) are disordered. Tudor-like regions lie at residues 129-205 (SLYK…LRAR) and 212-281 (EIKV…IEEP). The segment at 291–299 (PQKRQNGPE) is linker. The segment at 297-364 (GPECKHCKDN…DWYCPDCRND (68 aa)) adopts a PHD-type zinc-finger fold. Histone H3R2me0 binding stretches follow at residues 331–335 (CDECD) and 351–353 (PQD). Positions 417-580 (GPIPGVPVGT…FLVWRYLLRR (164 aa)) constitute a YDG domain. The required to promote base flipping stretch occupies residues 443–444 (HV). Residues 461–462 (AG) and aspartate 467 contribute to the DNA site. 2 required for formation of a 5-methylcytosine-binding pocket regions span residues 464–467 (YEDD) and 476–479 (YTGS). Over residues 615-626 (SKEREKENKTED) the composition is skewed to basic and acidic residues. A disordered region spans residues 615-649 (SKEREKENKTEDEPIDSPSKGKRKRNSDNEQTAAK). Residues 703–742 (CICCQEVVYEPVTTECHHNICKGCLDRSFKALVHSCPACR) form an RING-type zinc finger.

Its subcellular location is the nucleus. It catalyses the reaction S-ubiquitinyl-[E2 ubiquitin-conjugating enzyme]-L-cysteine + [acceptor protein]-L-lysine = [E2 ubiquitin-conjugating enzyme]-L-cysteine + N(6)-ubiquitinyl-[acceptor protein]-L-lysine.. It functions in the pathway protein modification; protein ubiquitination. Multidomain protein that acts as a key epigenetic regulator by bridging DNA methylation and chromatin modification. Specifically recognizes and binds hemimethylated DNA at replication forks via its YDG domain and recruits dnmt1 methyltransferase to ensure faithful propagation of the DNA methylation patterns through DNA replication. In addition to its role in maintenance of DNA methylation, also plays a key role in chromatin modification: through its tudor-like regions and PHD-type zinc fingers, specifically recognizes and binds histone H3 trimethylated at 'Lys-9' (H3K9me3) and unmethylated at 'Arg-2' (H3R2me0), respectively, and recruits chromatin proteins. Enriched in pericentric heterochromatin where it recruits different chromatin modifiers required for this chromatin replication. Also localizes to euchromatic regions where it negatively regulates transcription possibly by impacting DNA methylation and histone modifications. Has E3 ubiquitin-protein ligase activity by mediating the ubiquitination of target proteins. However, it is still unclear how E3 ubiquitin-protein ligase activity is related to its role in chromatin in vivo. The sequence is that of E3 ubiquitin-protein ligase UHRF1 (uhrf1) from Xenopus laevis (African clawed frog).